The chain runs to 59 residues: Large ribosomal subunit protein uL30 (59 aa).

The protein belongs to the universal ribosomal protein uL30 family. As to quaternary structure, part of the 50S ribosomal subunit.

This Geobacter metallireducens (strain ATCC 53774 / DSM 7210 / GS-15) protein is Large ribosomal subunit protein uL30.